The chain runs to 234 residues: 2,3,4,5-tetrahydropyridine-2,6-dicarboxylate N-acetyltransferase (234 aa).

It belongs to the transferase hexapeptide repeat family. DapH subfamily.

The catalysed reaction is (S)-2,3,4,5-tetrahydrodipicolinate + acetyl-CoA + H2O = L-2-acetamido-6-oxoheptanedioate + CoA. Its pathway is amino-acid biosynthesis; L-lysine biosynthesis via DAP pathway; LL-2,6-diaminopimelate from (S)-tetrahydrodipicolinate (acetylase route): step 1/3. Catalyzes the transfer of an acetyl group from acetyl-CoA to tetrahydrodipicolinate. The polypeptide is 2,3,4,5-tetrahydropyridine-2,6-dicarboxylate N-acetyltransferase (Ligilactobacillus salivarius (strain UCC118) (Lactobacillus salivarius)).